The following is a 346-amino-acid chain: GTPase Obg (346 aa).

The 159-residue stretch at 1–159 (MQFVDEANIR…RNLGLELSVL (159 aa)) folds into the Obg domain. A disordered region spans residues 127 to 149 (NVHFKSSTNRTPRQCTPGEPGDE). The span at 130 to 140 (FKSSTNRTPRQ) shows a compositional bias: polar residues. The OBG-type G domain occupies 160–333 (ADVGLLGMPN…LVKEVAYGLE (174 aa)). GTP contacts are provided by residues 166–173 (GMPNAGKS), 191–195 (FTTLY), 213–216 (DIPG), 283–286 (NKTD), and 314–316 (SAV). Residues serine 173 and threonine 193 each contribute to the Mg(2+) site.

Belongs to the TRAFAC class OBG-HflX-like GTPase superfamily. OBG GTPase family. Monomer. It depends on Mg(2+) as a cofactor.

The protein localises to the cytoplasm. Functionally, an essential GTPase which binds GTP, GDP and possibly (p)ppGpp with moderate affinity, with high nucleotide exchange rates and a fairly low GTP hydrolysis rate. Plays a role in control of the cell cycle, stress response, ribosome biogenesis and in those bacteria that undergo differentiation, in morphogenesis control. The sequence is that of GTPase Obg from Hydrogenovibrio crunogenus (strain DSM 25203 / XCL-2) (Thiomicrospira crunogena).